A 104-amino-acid chain; its full sequence is Large ribosomal subunit protein uL24 (104 aa).

The protein belongs to the universal ribosomal protein uL24 family. In terms of assembly, part of the 50S ribosomal subunit.

Its function is as follows. One of two assembly initiator proteins, it binds directly to the 5'-end of the 23S rRNA, where it nucleates assembly of the 50S subunit. In terms of biological role, one of the proteins that surrounds the polypeptide exit tunnel on the outside of the subunit. In Shewanella oneidensis (strain ATCC 700550 / JCM 31522 / CIP 106686 / LMG 19005 / NCIMB 14063 / MR-1), this protein is Large ribosomal subunit protein uL24.